A 360-amino-acid polypeptide reads, in one-letter code: tRNA-specific 2-thiouridylase MnmA (360 aa).

ATP-binding positions include 9-16 and Leu35; that span reads AMSGGVDS. Catalysis depends on Cys104, which acts as the Nucleophile. A disulfide bond links Cys104 and Cys197. Gly128 provides a ligand contact to ATP. The interval 147 to 149 is interaction with tRNA; that stretch reads KDQ. The Cysteine persulfide intermediate role is filled by Cys197.

Belongs to the MnmA/TRMU family.

The protein localises to the cytoplasm. It catalyses the reaction S-sulfanyl-L-cysteinyl-[protein] + uridine(34) in tRNA + AH2 + ATP = 2-thiouridine(34) in tRNA + L-cysteinyl-[protein] + A + AMP + diphosphate + H(+). Functionally, catalyzes the 2-thiolation of uridine at the wobble position (U34) of tRNA, leading to the formation of s(2)U34. This is tRNA-specific 2-thiouridylase MnmA from Salinispora tropica (strain ATCC BAA-916 / DSM 44818 / JCM 13857 / NBRC 105044 / CNB-440).